The sequence spans 200 residues: Dephospho-CoA kinase (200 aa).

One can recognise a DPCK domain in the interval 3-200 (IIGLTGGIGS…LWQRFATQVE (198 aa)). 11-16 (GSGKST) is an ATP binding site.

The protein belongs to the CoaE family.

The protein localises to the cytoplasm. It catalyses the reaction 3'-dephospho-CoA + ATP = ADP + CoA + H(+). It participates in cofactor biosynthesis; coenzyme A biosynthesis; CoA from (R)-pantothenate: step 5/5. In terms of biological role, catalyzes the phosphorylation of the 3'-hydroxyl group of dephosphocoenzyme A to form coenzyme A. This chain is Dephospho-CoA kinase, found in Corynebacterium diphtheriae (strain ATCC 700971 / NCTC 13129 / Biotype gravis).